The chain runs to 359 residues: UPF0284 protein MTH_1426 (359 aa).

The protein belongs to the UPF0284 family.

This chain is UPF0284 protein MTH_1426, found in Methanothermobacter thermautotrophicus (strain ATCC 29096 / DSM 1053 / JCM 10044 / NBRC 100330 / Delta H) (Methanobacterium thermoautotrophicum).